The sequence spans 272 residues: Ethanolamine ammonia-lyase small subunit (272 aa).

The adenosylcob(III)alamin site is built by Val161, Glu182, and Cys211.

It belongs to the EutC family. As to quaternary structure, the basic unit is a heterodimer which dimerizes to form tetramers. The heterotetramers trimerize; 6 large subunits form a core ring with 6 small subunits projecting outwards. Requires adenosylcob(III)alamin as cofactor.

The protein localises to the bacterial microcompartment. The enzyme catalyses ethanolamine = acetaldehyde + NH4(+). Its pathway is amine and polyamine degradation; ethanolamine degradation. Catalyzes the deamination of various vicinal amino-alcohols to oxo compounds. Allows this organism to utilize ethanolamine as the sole source of nitrogen and carbon in the presence of external vitamin B12. This is Ethanolamine ammonia-lyase small subunit from Pseudomonas putida (strain ATCC 700007 / DSM 6899 / JCM 31910 / BCRC 17059 / LMG 24140 / F1).